Consider the following 41-residue polypeptide: Large ribosomal subunit protein bL36 (41 aa).

The protein belongs to the bacterial ribosomal protein bL36 family.

The chain is Large ribosomal subunit protein bL36 from Stenotrophomonas maltophilia (strain R551-3).